An 831-amino-acid chain; its full sequence is DNA ligase (831 aa).

NAD(+)-binding positions include 34–38 (DADYD), 83–84 (SL), and glutamate 114. The active-site N6-AMP-lysine intermediate is the lysine 116. Arginine 137, glutamate 174, lysine 291, and lysine 315 together coordinate NAD(+). Residues cysteine 409, cysteine 412, cysteine 427, and cysteine 433 each contribute to the Zn(2+) site. The 83-residue stretch at 749–831 (AHTAPLNGQS…LAFLEQYSAQ (83 aa)) folds into the BRCT domain.

It belongs to the NAD-dependent DNA ligase family. LigA subfamily. Mg(2+) is required as a cofactor. The cofactor is Mn(2+).

It carries out the reaction NAD(+) + (deoxyribonucleotide)n-3'-hydroxyl + 5'-phospho-(deoxyribonucleotide)m = (deoxyribonucleotide)n+m + AMP + beta-nicotinamide D-nucleotide.. Functionally, DNA ligase that catalyzes the formation of phosphodiester linkages between 5'-phosphoryl and 3'-hydroxyl groups in double-stranded DNA using NAD as a coenzyme and as the energy source for the reaction. It is essential for DNA replication and repair of damaged DNA. This is DNA ligase from Xylella fastidiosa (strain M23).